We begin with the raw amino-acid sequence, 264 residues long: Undecaprenyl-diphosphatase (264 aa).

The next 7 membrane-spanning stretches (helical) occupy residues 38–58 (RSDF…VLVF), 75–95 (REYV…GLVV), 106–126 (VSPV…VEAY), 136–156 (VTWT…VFPG), 181–201 (FVFL…FLEM), 217–237 (VAFL…MGYI), and 242–262 (FTAF…WLPS).

The protein belongs to the UppP family.

Its subcellular location is the cell membrane. The catalysed reaction is di-trans,octa-cis-undecaprenyl diphosphate + H2O = di-trans,octa-cis-undecaprenyl phosphate + phosphate + H(+). Catalyzes the dephosphorylation of undecaprenyl diphosphate (UPP). Confers resistance to bacitracin. This chain is Undecaprenyl-diphosphatase, found in Stenotrophomonas maltophilia (strain K279a).